The primary structure comprises 588 residues: Adenine deaminase (588 aa).

This sequence belongs to the metallo-dependent hydrolases superfamily. Adenine deaminase family. In terms of assembly, homodimer. Mn(2+) is required as a cofactor.

It catalyses the reaction adenine + H2O + H(+) = hypoxanthine + NH4(+). This is Adenine deaminase from Escherichia coli O6:H1 (strain CFT073 / ATCC 700928 / UPEC).